A 716-amino-acid chain; its full sequence is Polyribonucleotide nucleotidyltransferase (716 aa).

Mg(2+)-binding residues include D490 and D496. The KH domain maps to 556–615 (PKIETLTIPTDKIREVIGSGGKVIREIVETSGAKVDINDDGVIKIASNDQAAIKKAYDMI). The S1 motif domain occupies 625-693 (GQIYTGKVVK…ERGKVRLGMK (69 aa)). Positions 695–716 (VDQETGQEIQPEKKEKEEAGEA) are disordered. The segment covering 704-716 (QPEKKEKEEAGEA) has biased composition (basic and acidic residues).

This sequence belongs to the polyribonucleotide nucleotidyltransferase family. Mg(2+) serves as cofactor.

It is found in the cytoplasm. It carries out the reaction RNA(n+1) + phosphate = RNA(n) + a ribonucleoside 5'-diphosphate. In terms of biological role, involved in mRNA degradation. Catalyzes the phosphorolysis of single-stranded polyribonucleotides processively in the 3'- to 5'-direction. This is Polyribonucleotide nucleotidyltransferase from Cereibacter sphaeroides (strain ATCC 17029 / ATH 2.4.9) (Rhodobacter sphaeroides).